Reading from the N-terminus, the 200-residue chain is Peroxiredoxin (200 aa).

The Thioredoxin domain occupies 6–165; sequence AQIGKPAPEF…TLRLVQAFQH (160 aa). Catalysis depends on cysteine 52, which acts as the Cysteine sulfenic acid (-SOH) intermediate.

This sequence belongs to the peroxiredoxin family. AhpC/Prx1 subfamily. As to quaternary structure, homodimer; disulfide-linked, upon oxidation.

It carries out the reaction a hydroperoxide + [thioredoxin]-dithiol = an alcohol + [thioredoxin]-disulfide + H2O. Functionally, thiol-specific peroxidase that catalyzes the reduction of hydrogen peroxide and organic hydroperoxides to water and alcohols, respectively. Plays a role in cell protection against oxidative stress by detoxifying peroxides and as sensor of hydrogen peroxide-mediated signaling events. This Cynops pyrrhogaster (Japanese fire-bellied newt) protein is Peroxiredoxin.